The chain runs to 142 residues: Transcriptional regulator MraZ (142 aa).

SpoVT-AbrB domains lie at 5 to 47 (EYPY…PLAS) and 76 to 119 (ANKA…NPGR).

This sequence belongs to the MraZ family. In terms of assembly, forms oligomers.

Its subcellular location is the cytoplasm. The protein localises to the nucleoid. The protein is Transcriptional regulator MraZ of Deinococcus deserti (strain DSM 17065 / CIP 109153 / LMG 22923 / VCD115).